Reading from the N-terminus, the 139-residue chain is Endoribonuclease YbeY (139 aa).

Residues His99, His103, and His109 each contribute to the Zn(2+) site.

It belongs to the endoribonuclease YbeY family. Zn(2+) is required as a cofactor.

The protein localises to the cytoplasm. Functionally, single strand-specific metallo-endoribonuclease involved in late-stage 70S ribosome quality control and in maturation of the 3' terminus of the 16S rRNA. The protein is Endoribonuclease YbeY of Nautilia profundicola (strain ATCC BAA-1463 / DSM 18972 / AmH).